A 354-amino-acid polypeptide reads, in one-letter code: L-lactate dehydrogenase (354 aa).

NAD(+) contacts are provided by residues 73-78 (DAVPDK) and Arg-120. Residues Arg-127, Asn-159, and Arg-190 each contribute to the substrate site. Asn-159 contacts NAD(+). His-214 (proton acceptor) is an active-site residue. Substrate is bound at residue Thr-269. The disordered stretch occupies residues 302–332 (HGIPDGTTSSSACPPRRPRRRPGRREMELTE).

It belongs to the LDH/MDH superfamily. LDH family. Homotetramer.

It carries out the reaction (S)-lactate + NAD(+) = pyruvate + NADH + H(+). The protein operates within fermentation; pyruvate fermentation to lactate; (S)-lactate from pyruvate: step 1/1. The protein is L-lactate dehydrogenase of Zea mays (Maize).